The primary structure comprises 153 residues: Gamma-glutamylaminecyclotransferase (153 aa).

7–10 (YGTL) serves as a coordination point for substrate. Residue Glu-82 is the Proton acceptor of the active site. The disordered stretch occupies residues 130-153 (QLPHHDSYDSEGPHGLRYNPRENR). Over residues 132-153 (PHHDSYDSEGPHGLRYNPRENR) the composition is skewed to basic and acidic residues.

It belongs to the gamma-glutamylcyclotransferase family. As to quaternary structure, monomer.

The enzyme catalyses epsilon-(gamma-L-glutamyl)-L-lysine = 5-oxo-L-proline + L-lysine. In terms of biological role, contributes to degradation of proteins cross-linked by transglutaminases by degrading the cross-link between a lysine and a glutamic acid residue. Catalyzes the formation of 5-oxo-L-proline from L-gamma-glutamyl-L-epsilon-lysine. Inactive with L-gamma-glutamyl-alpha-amino acid substrates such as L-gamma-glutamyl-L-alpha-cysteine and L-gamma-glutamyl-L-alpha-alanine. This Homo sapiens (Human) protein is Gamma-glutamylaminecyclotransferase (GGACT).